Consider the following 345-residue polypeptide: GMP reductase 1 (345 aa).

26–27 (SR) is a binding site for NADP(+). Serine 28 is subject to Phosphoserine. NADP(+) is bound by residues lysine 78, 129–131 (DVA), and 180–181 (VG). Positions 181, 183, and 186 each coordinate K(+). Cysteine 186 acts as the Thioimidate intermediate in catalysis. The active-site Proton donor/acceptor is the threonine 188. Arginine 189 is a binding site for K(+). Residues 242–243 (GG), 268–270 (GMS), and 286–290 (RASEG) each bind GMP. Residues methionine 269, 285-286 (YR), and 314-317 (STCT) each bind NADP(+).

It belongs to the IMPDH/GMPR family. GuaC type 1 subfamily. Homotetramer.

The enzyme catalyses IMP + NH4(+) + NADP(+) = GMP + NADPH + 2 H(+). In terms of biological role, catalyzes the irreversible NADPH-dependent deamination of GMP to IMP. It functions in the conversion of nucleobase, nucleoside and nucleotide derivatives of G to A nucleotides, and in maintaining the intracellular balance of A and G nucleotides. In Rattus norvegicus (Rat), this protein is GMP reductase 1 (Gmpr).